Consider the following 483-residue polypeptide: MAGFAELGLSSWLVEQCRQLGLKQPTPVQLGCIPAILEGRDCLGCAKTGSGKTAAFVLPILQKLSEDPYGIFCLVLTPTRELAYQIAEQFRVLGKPLGLKDCIIVGGMDMVAQALELSRKPHVVIATPGRLADHLRSSNTFSIKKIRFLVMDEADRLLEQGCTDFTVDLEAILAAVPARRQTLLFSATLTDTLRELQGLATNQPFFWEAQAPVSTVEQLDQRYLLVPEKVKDAYLVHLIQRFQDEHEDWSIIIFTNTCKTCQILCMMLRKFSFPTVALHSMMKQKERFAALAKFKSSIYRILIATDVASRGLDIPTVQVVINHNTPGLPKIYIHRVGRTARAGRQGQAITLVTQYDIHLVHAIEEQIKKKLEEFSVEEAEVLQILTQVNVVRRECEIKLEAAHFDEKKEINKRKQLILEGKDPDLEAKRKAELAKIKQKNRRFKEKVEETLKRQKAGRAGHKGRPPRTPSGSHSGPVPSQGLV.

A Q motif motif is present at residues 2–30 (AGFAELGLSSWLVEQCRQLGLKQPTPVQL). The 175-residue stretch at 33–207 (IPAILEGRDC…GLATNQPFFW (175 aa)) folds into the Helicase ATP-binding domain. 46–53 (AKTGSGKT) is an ATP binding site. The short motif at 152 to 155 (DEAD) is the DEAD box element. The Helicase C-terminal domain maps to 218-382 (QLDQRYLLVP…EFSVEEAEVL (165 aa)). The tract at residues 444-483 (KEKVEETLKRQKAGRAGHKGRPPRTPSGSHSGPVPSQGLV) is disordered. Over residues 453–465 (RQKAGRAGHKGRP) the composition is skewed to basic residues.

The protein belongs to the DEAD box helicase family. DDX49/DBP8 subfamily.

It localises to the nucleus. The protein resides in the nucleolus. It carries out the reaction ATP + H2O = ADP + phosphate + H(+). Functionally, ATP-dependent RNA helicase that plays a role in various aspects of RNA metabolism including the regulation of mRNA export and the levels of pre-ribosomal RNA. Regulates the stability and synthesis of pre-ribosomal RNA and thereby regulates cell proliferation. Also possesses antiviral activity by recognizing gammaherpesvirus transcripts in the context of lytic reactivation. This Homo sapiens (Human) protein is Probable ATP-dependent RNA helicase DDX49 (DDX49).